Consider the following 259-residue polypeptide: uncharacterized protein (259 aa).

Residues 158–187 (VELHLKIIEEDMKETTKKNKEKKQNSQSQE) adopt a coiled-coil conformation. Basic and acidic residues predominate over residues 172 to 181 (TTKKNKEKKQ). 2 disordered regions span residues 172–197 (TTKKNKEKKQNSQSQEISNSIEMEVS) and 217–240 (PVKKTSSASKSDSDKKNKRQQLSK). Composition is skewed to low complexity over residues 182–193 (NSQSQEISNSIE) and 217–226 (PVKKTSSASK).

This is an uncharacterized protein from Acanthamoeba polyphaga mimivirus (APMV).